The sequence spans 244 residues: Mitochondrial import inner membrane translocase subunit Tim21 (244 aa).

The N-terminal 18 residues, 1 to 18 (MICAFLRVVQHAEKLHGS), are a transit peptide targeting the mitochondrion. The interval 65–96 (TQGPDPRKAKEDSTKQVSIRRNQREETGVSMS) is disordered. A compositionally biased stretch (basic and acidic residues) spans 69–78 (DPRKAKEDST). A helical transmembrane segment spans residues 107–127 (SYLIVVLFGVGLTGGLLYAIF).

It belongs to the TIM21 family. As to quaternary structure, component of the TIM23 complex. Component of the MITRAC (mitochondrial translation regulation assembly intermediate of cytochrome c oxidase complex) complex, the core components of this complex being COA3/MITRAC12 and COX14. Interacts with COA3 and MT-CO1/COX1.

The protein resides in the mitochondrion membrane. Participates in the translocation of transit peptide-containing proteins across the mitochondrial inner membrane. Also required for assembly of mitochondrial respiratory chain complex I and complex IV as component of the MITRAC (mitochondrial translation regulation assembly intermediate of cytochrome c oxidase complex) complex. Probably shuttles between the presequence translocase and respiratory-chain assembly intermediates in a process that promotes incorporation of early nuclear-encoded subunits into these complexes. The protein is Mitochondrial import inner membrane translocase subunit Tim21 (Timm21) of Mus musculus (Mouse).